A 156-amino-acid chain; its full sequence is Small ribosomal subunit protein bS18c (156 aa).

A disordered region spans residues 1 to 54 (MYTSKQPFLKSKQPFRKSKQPFRKSKQPFRKFKKPFRKSKQPFRRRPRIGPGDR). Basic residues predominate over residues 13–48 (QPFRKSKQPFRKSKQPFRKFKKPFRKSKQPFRRRPR).

The protein belongs to the bacterial ribosomal protein bS18 family. As to quaternary structure, part of the 30S ribosomal subunit.

The protein localises to the plastid. It localises to the chloroplast. This chain is Small ribosomal subunit protein bS18c, found in Lolium perenne (Perennial ryegrass).